The chain runs to 247 residues: MINNYIDITIRLLENILDNEADYVKEAGAKVAESIENDGVIHLFGCGHSHILTEEVFYRAGGLAAIHPILHEPLMLHEGAAASSVLERKNDYAKTFMAEEDIRSGDVMIVLSTSGRNPVPIDVAEIAREKGAFVIVITSLQYSASQKSRHTSGKRLSDTGDIVIDNGAVKGDAVLKSANFDIAFAPTSTVTGAVILQSIFAEAIEKMVNDNFTPPVFISGNVENADEHNQALVDKYNERIPLLGMNL.

The 184-residue stretch at 31-214 folds into the SIS domain; the sequence is VAESIENDGV…EKMVNDNFTP (184 aa).

The protein belongs to the UPF0309 family.

This chain is UPF0309 protein lin2794, found in Listeria innocua serovar 6a (strain ATCC BAA-680 / CLIP 11262).